The primary structure comprises 100 residues: Apolipoprotein C-II (100 aa).

An N-terminal signal peptide occupies residues 1–22; that stretch reads MSSQFLLAFFLVLLVLGYEVQG. Positions 66-74 are lipid binding; sequence SVDEKLRDM. The tract at residues 78–100 is lipoprotein lipase cofactor; sequence SSAAMSTYAGIFTDQLFTLLKGE.

The protein belongs to the apolipoprotein C2 family. Proapolipoprotein C-II is synthesized as a sialic acid containing glycoprotein which is subsequently desialylated prior to its proteolytic processing. Post-translationally, proapolipoprotein C-II, the major form found in plasma undergoes proteolytic cleavage of its N-terminal hexapeptide to generate the mature form apolipoprotein C-II, which occurs as the minor form in plasma.

The protein resides in the secreted. Its function is as follows. Component of chylomicrons, very low-density lipoproteins (VLDL), low-density lipoproteins (LDL), and high-density lipoproteins (HDL) in plasma. Plays an important role in lipoprotein metabolism as an activator of lipoprotein lipase. The sequence is that of Apolipoprotein C-II (APOC2) from Cricetulus griseus (Chinese hamster).